A 533-amino-acid chain; its full sequence is MPKKKPAKHSGEDDITIPVSPQTGSSIDTWWWLTHKGTTTSFLCISLFALLIRSAVTMYPYSGAGIPPKFGDFEAQRHWMEITTNLPVIDWYRNGTYNDLTYWGLDYPPLTAYQSYIHGIFLRFFNPESVALLSSRGHESYLGKLLMRWTVLSSDAFIFFPAALFFVLVYHRNRTRGGKSEVAWHIAMILLNPCLILIDHGHFQYNCISLGLTVGAIAAVLCESEVLTCVLFSLALSHKQMSAYFAPAFFSHLLGKCLRRKSPILSVIKLGIAVIVTFVIFWWPYVHSLDDFLMVLSRLAPFERGIYEDYVANFWCTTSILIKWKNLFTTQSLKSISLAATILASLPSMVQQILSPSNEGFLYGLLNSSMAFYLFSFQVHEKSILMPFLSATLLALKLPDHFSHLTYYALFSMFPLLCRDKLLIPYLTLSFLFTVIYHSPGNHHAIQKTDVSFFSFKNFPGYVFLLRTHFFISVVLHVLYLTIKPPQKYPFLFEALIMILCFSYFIMFAFYTNYTQWTLSSHFGSSDKEKKQI.

The disordered stretch occupies residues 1–20; that stretch reads MPKKKPAKHSGEDDITIPVS. A run of 9 helical transmembrane segments spans residues 42–64, 149–169, 184–204, 214–234, 264–284, 360–380, 422–442, 463–483, and 491–511; these read FLCI…YSGA, WTVL…FVLV, WHIA…GHFQ, VGAI…LFSL, ILSV…FWWP, GFLY…FQVH, LLIP…SPGN, VFLL…YLTI, and FLFE…FAFY.

It belongs to the ALG6/ALG8 glucosyltransferase family.

The protein localises to the endoplasmic reticulum membrane. It catalyses the reaction an alpha-D-Man-(1-&gt;2)-alpha-D-Man-(1-&gt;2)-alpha-D-Man-(1-&gt;3)-[alpha-D-Man-(1-&gt;2)-alpha-D-Man-(1-&gt;3)-[alpha-D-Man-(1-&gt;2)-alpha-D-Man-(1-&gt;6)]-alpha-D-Man-(1-&gt;6)]-beta-D-Man-(1-&gt;4)-beta-D-GlcNAc-(1-&gt;4)-alpha-D-GlcNAc-diphospho-di-trans,poly-cis-dolichol + a di-trans,poly-cis-dolichyl beta-D-glucosyl phosphate = an alpha-D-Glc-(1-&gt;3)-alpha-D-Man-(1-&gt;2)-alpha-D-Man-(1-&gt;2)-alpha-D-Man-(1-&gt;3)-[alpha-D-Man-(1-&gt;2)-alpha-D-Man-(1-&gt;3)-[alpha-D-Man-(1-&gt;2)-alpha-D-Man-(1-&gt;6)]-alpha-D-Man-(1-&gt;6)]-beta-D-Man-(1-&gt;4)-beta-D-GlcNAc-(1-&gt;4)-alpha-D-GlcNAc-diphospho-di-trans,poly-cis-dolichol + a di-trans,poly-cis-dolichyl phosphate + H(+). Its pathway is protein modification; protein glycosylation. In terms of biological role, adds the first glucose residue to the lipid-linked oligosaccharide precursor for N-linked glycosylation. Transfers glucose from dolichyl phosphate glucose (Dol-P-Glc) onto the lipid-linked oligosaccharide Man(9)GlcNAc(2)-PP-Dol. The sequence is that of Probable dolichyl pyrophosphate Man9GlcNAc2 alpha-1,3-glucosyltransferase from Arabidopsis thaliana (Mouse-ear cress).